The sequence spans 650 residues: Growth hormone receptor (650 aa).

Positions methionine 1 to alanine 24 are cleaved as a signal peptide. The Extracellular portion of the chain corresponds to threonine 25–glutamine 273. 2 disulfide bridges follow: cysteine 56–cysteine 66 and cysteine 109–cysteine 120. Asparagine 123 is a glycosylation site (N-linked (GlcNAc...) asparagine). A disulfide bridge connects residues cysteine 134 and cysteine 148. Residues proline 159 to threonine 262 enclose the Fibronectin type-III domain. Asparagine 164, asparagine 169, and asparagine 208 each carry an N-linked (GlcNAc...) asparagine glycan. A WSXWS motif motif is present at residues tyrosine 248–serine 252. The helical transmembrane segment at phenylalanine 274–serine 297 threads the bilayer. Topologically, residues lysine 298–glutamine 650 are cytoplasmic. The tract at residues lysine 303–alanine 390 is required for JAK2 binding. Positions isoleucine 306 to lysine 314 match the Box 1 motif motif. The UbE motif motif lies at aspartate 349–aspartate 358. Serine 350 bears the Phosphoserine mark. Residues lysine 466–methionine 486 are disordered. The segment covering leucine 470–methionine 486 has biased composition (polar residues). Residues tyrosine 498 and tyrosine 606 each carry the phosphotyrosine modification.

This sequence belongs to the type I cytokine receptor family. Type 1 subfamily. In terms of assembly, on growth hormone (GH) binding, forms homodimers and binds JAK2 via a box 1-containing domain. In terms of processing, the soluble form (GHBP) is produced by phorbol ester-promoted proteolytic cleavage at the cell surface (shedding) by ADAM17/TACE. Shedding is inhibited by growth hormone (GH) binding to the receptor probably due to a conformational change in GHR rendering the receptor inaccessible to ADAM17. Post-translationally, on GH binding, phosphorylated on tyrosine residues in the cytoplasmic domain by JAK2. Ubiquitinated by the ECS(SOCS2) complex following ligand-binding and phosphorylation by JAK2, leading to its degradation by the proteasome. Regulation by the ECS(SOCS2) complex acts as a negative feedback loop of growth hormone receptor signaling. Ubiquitination is not sufficient for GHR internalization. In terms of tissue distribution, expressed in all tissues tested including, liver, heart, adipose tissue, mammary gland, testes, ovary, brain, kidney and muscle. Highest levels in liver.

The protein localises to the cell membrane. The protein resides in the secreted. Receptor for pituitary gland growth hormone (GH1) involved in regulating postnatal body growth. On ligand binding, couples to the JAK2/STAT5 pathway. In terms of biological role, the soluble form (GHBP) acts as a reservoir of growth hormone in plasma and may be a modulator/inhibitor of GH signaling. The sequence is that of Growth hormone receptor (Ghr) from Mus musculus (Mouse).